The primary structure comprises 421 residues: FBD-associated F-box protein At5g56370 (421 aa).

An F-box domain is found at 1–52 (MDSISLLPDDFLLRILSLLPTKDVLNTSVLSKRWRYLWKLVPKLQYSLIDKN). The FBD domain maps to 332–382 (HWEEPSSVPETLMFVLETLEWRNYRGLKMENELASFLLKHSRRLKIATFSP).

The sequence is that of FBD-associated F-box protein At5g56370 from Arabidopsis thaliana (Mouse-ear cress).